The following is a 254-amino-acid chain: Kallikrein-4 (254 aa).

The signal sequence occupies residues Met1 to Gly26. The propeptide occupies Ser27–Gln30. Positions Ile31 to Gln252 constitute a Peptidase S1 domain. 6 disulfide bridges follow: Cys37–Cys167, Cys56–Cys72, Cys141–Cys241, Cys148–Cys213, Cys178–Cys192, and Cys203–Cys228. Residue His40 participates in Zn(2+) binding. His71 functions as the Charge relay system in the catalytic mechanism. Zn(2+) is bound at residue Glu91. Asp116 functions as the Charge relay system in the catalytic mechanism. The N-linked (GlcNAc...) asparagine glycan is linked to Asn169. The active-site Charge relay system is the Ser207.

The protein belongs to the peptidase S1 family. Kallikrein subfamily. Post-translationally, N-glycosylated. The N-glycan structures are of complex diantennary or triantennary type, which may be further modified with up to 2 sialic acid residues. In terms of tissue distribution, expressed in prostate.

The protein resides in the secreted. Its function is as follows. Has a major role in enamel formation. Required during the maturation stage of tooth development for clearance of enamel proteins and normal structural patterning of the crystalline matrix. This Homo sapiens (Human) protein is Kallikrein-4 (KLK4).